A 114-amino-acid polypeptide reads, in one-letter code: Probable non-functional T cell receptor beta variable 5-7 (114 aa).

Positions 1–21 (MGPGLLCWVLLCPLGEGPVDA) are cleaved as a signal peptide. The 93-residue stretch at 22–114 (GVTQSPTHLI…SALYLCASSL (93 aa)) folds into the Ig-like domain. Cysteine 42 and cysteine 110 are oxidised to a cystine. Residue asparagine 90 is glycosylated (N-linked (GlcNAc...) asparagine).

As to quaternary structure, alpha-beta TR is a heterodimer composed of an alpha and beta chain; disulfide-linked. The alpha-beta TR is associated with the transmembrane signaling CD3 coreceptor proteins to form the TR-CD3 (TcR or TCR). The assembly of alpha-beta TR heterodimers with CD3 occurs in the endoplasmic reticulum where a single alpha-beta TR heterodimer associates with one CD3D-CD3E heterodimer, one CD3G-CD3E heterodimer and one CD247 homodimer forming a stable octameric structure. CD3D-CD3E and CD3G-CD3E heterodimers preferentially associate with TR alpha and TR beta chains, respectively. The association of the CD247 homodimer is the last step of TcR assembly in the endoplasmic reticulum and is required for transport to the cell surface.

It is found in the cell membrane. Functionally, probable non-functional open reading frame (ORF) of V region of the variable domain of T cell receptor (TR) beta chain. Non-functional ORF generally cannot participate in the synthesis of a productive T cell receptor (TR) chain due to altered V-(D)-J or switch recombination and/or splicing site (at mRNA level) and/or conserved amino acid change (protein level). Alpha-beta T cell receptors are antigen specific receptors which are essential to the immune response and are present on the cell surface of T lymphocytes. Recognize peptide-major histocompatibility (MH) (pMH) complexes that are displayed by antigen presenting cells (APC), a prerequisite for efficient T cell adaptive immunity against pathogens. Binding of alpha-beta TR to pMH complex initiates TR-CD3 clustering on the cell surface and intracellular activation of LCK that phosphorylates the ITAM motifs of CD3G, CD3D, CD3E and CD247 enabling the recruitment of ZAP70. In turn ZAP70 phosphorylates LAT, which recruits numerous signaling molecules to form the LAT signalosome. The LAT signalosome propagates signal branching to three major signaling pathways, the calcium, the mitogen-activated protein kinase (MAPK) kinase and the nuclear factor NF-kappa-B (NF-kB) pathways, leading to the mobilization of transcription factors that are critical for gene expression and essential for T cell growth and differentiation. The T cell repertoire is generated in the thymus, by V-(D)-J rearrangement. This repertoire is then shaped by intrathymic selection events to generate a peripheral T cell pool of self-MH restricted, non-autoaggressive T cells. Post-thymic interaction of alpha-beta TR with the pMH complexes shapes TR structural and functional avidity. This is Probable non-functional T cell receptor beta variable 5-7 from Homo sapiens (Human).